The sequence spans 488 residues: Ribulose bisphosphate carboxylase large chain (488 aa).

The substrate site is built by asparagine 127 and threonine 177. Lysine 179 serves as the catalytic Proton acceptor. Lysine 181 serves as a coordination point for substrate. The Mg(2+) site is built by lysine 205, aspartate 207, and glutamate 208. N6-carboxylysine is present on lysine 205. Histidine 297 acts as the Proton acceptor in catalysis. Residues arginine 298, histidine 330, and serine 382 each contribute to the substrate site.

Belongs to the RuBisCO large chain family. Type I subfamily. As to quaternary structure, heterohexadecamer of 8 large chains and 8 small chains. Requires Mg(2+) as cofactor.

It is found in the plastid. The protein localises to the chloroplast. The catalysed reaction is 2 (2R)-3-phosphoglycerate + 2 H(+) = D-ribulose 1,5-bisphosphate + CO2 + H2O. It catalyses the reaction D-ribulose 1,5-bisphosphate + O2 = 2-phosphoglycolate + (2R)-3-phosphoglycerate + 2 H(+). In terms of biological role, ruBisCO catalyzes two reactions: the carboxylation of D-ribulose 1,5-bisphosphate, the primary event in carbon dioxide fixation, as well as the oxidative fragmentation of the pentose substrate in the photorespiration process. Both reactions occur simultaneously and in competition at the same active site. This Porphyra purpurea (Red seaweed) protein is Ribulose bisphosphate carboxylase large chain.